The following is a 430-amino-acid chain: Solanesyl-diphosphate synthase 1, mitochondrial (430 aa).

A mitochondrion-targeting transit peptide spans 1 to 31 (MSWRWALARRVAALGATSGGGDGATAQAQRL). Residues Lys-133, Arg-136, and His-182 each contribute to the isopentenyl diphosphate site. The Mg(2+) site is built by Asp-189 and Asp-193. Residue Arg-198 coordinates an all-trans-polyprenyl diphosphate. Arg-199 provides a ligand contact to isopentenyl diphosphate. Lys-275, Thr-276, Gln-313, and Lys-330 together coordinate an all-trans-polyprenyl diphosphate.

The protein belongs to the FPP/GGPP synthase family. In terms of assembly, homodimer. Requires Mg(2+) as cofactor. Expressed in leaves, stems and roots. Highest expression in roots.

Its subcellular location is the mitochondrion. It carries out the reaction 7 isopentenyl diphosphate + (2E)-geranyl diphosphate = all-trans-nonaprenyl diphosphate + 7 diphosphate. Its pathway is cofactor biosynthesis; ubiquinone biosynthesis. In terms of biological role, involved in the supply of solanesyl diphosphate for ubiquinone-9 (UQ-9) biosynthesis in mitochondria. Farnesyl diphosphate is the preferred substrate. This chain is Solanesyl-diphosphate synthase 1, mitochondrial, found in Oryza sativa subsp. japonica (Rice).